A 1150-amino-acid polypeptide reads, in one-letter code: Voltage-dependent calcium channel subunit alpha-2/delta-2 (1150 aa).

The first 18 residues, 1–18 (MAVPARTCGASRPGPART), serve as a signal peptide directing secretion. Positions 1 to 41 (MAVPARTCGASRPGPARTARPWPGCGPHPGPGTRRPTSGPP) are disordered. Residues 19 to 1113 (ARPWPGCGPH…TEDTSDCGRG (1095 aa)) are Extracellular-facing. One can recognise a VWFA domain in the interval 291 to 469 (DMVIIVDVSG…INTQEYLDVL (179 aa)). Aspartate 297, serine 299, and serine 301 together coordinate a divalent metal cation. Positions 297–301 (DVSGS) match the MIDAS-like motif motif. N-linked (GlcNAc...) asparagine glycosylation is found at asparagine 386, asparagine 418, asparagine 507, asparagine 540, asparagine 624, and asparagine 861. The cysteines at positions 443 and 1098 are disulfide-linked. The region spanning 485 to 574 (WTNVYEDALG…KPQTTNFREP (90 aa)) is the Cache domain. A helical membrane pass occupies residues 1114–1134 (ASFPPSLGVLVSLQLLLLLGL). At 1135-1150 (PPRPQPQVLVHASRRL) the chain is on the cytoplasmic side.

It belongs to the calcium channel subunit alpha-2/delta family. As to quaternary structure, dimer formed of alpha-2-2 and delta-2 chains; disulfide-linked. Voltage-dependent calcium channels are multisubunit complexes, consisting of alpha-1 (CACNA1), alpha-2 (CACNA2D), beta (CACNB) and delta (CACNA2D) subunits in a 1:1:1:1 ratio. In terms of processing, may be proteolytically processed into subunits alpha-2-2 and delta-2 that are disulfide-linked. It is however unclear whether such cleavage really takes place in vivo and has a functional role. In terms of tissue distribution, predominantly present in cerebellar cortex. Present in various lung tumor cell lines, while it is absent in normal lung (at protein level). Highly expressed in heart, lung, testis, pancreas and skeletal muscle. Also expressed in kidney, liver, placenta and brain.

The protein resides in the membrane. The alpha-2/delta subunit of voltage-dependent calcium channels regulates calcium current density and activation/inactivation kinetics of the calcium channel. Acts as a regulatory subunit for P/Q-type calcium channel (CACNA1A), N-type (CACNA1B), L-type (CACNA1C OR CACNA1D) and possibly T-type (CACNA1G). Overexpression induces apoptosis. The polypeptide is Voltage-dependent calcium channel subunit alpha-2/delta-2 (CACNA2D2) (Homo sapiens (Human)).